We begin with the raw amino-acid sequence, 137 residues long: NADPH-dependent 7-cyano-7-deazaguanine reductase (137 aa).

Cys-45 (thioimide intermediate) is an active-site residue. Catalysis depends on Asp-52, which acts as the Proton donor. Substrate is bound by residues Val-68 to Leu-70 and Gln-87 to Glu-88.

The protein belongs to the GTP cyclohydrolase I family. QueF type 1 subfamily.

It is found in the cytoplasm. The enzyme catalyses 7-aminomethyl-7-carbaguanine + 2 NADP(+) = 7-cyano-7-deazaguanine + 2 NADPH + 3 H(+). Its pathway is tRNA modification; tRNA-queuosine biosynthesis. In terms of biological role, catalyzes the NADPH-dependent reduction of 7-cyano-7-deazaguanine (preQ0) to 7-aminomethyl-7-deazaguanine (preQ1). The chain is NADPH-dependent 7-cyano-7-deazaguanine reductase from Thermotoga petrophila (strain ATCC BAA-488 / DSM 13995 / JCM 10881 / RKU-1).